Reading from the N-terminus, the 147-residue chain is Prefoldin subunit alpha (147 aa).

The protein belongs to the prefoldin alpha subunit family. As to quaternary structure, heterohexamer of two alpha and four beta subunits.

It localises to the cytoplasm. Molecular chaperone capable of stabilizing a range of proteins. Seems to fulfill an ATP-independent, HSP70-like function in archaeal de novo protein folding. This Saccharolobus islandicus (strain L.S.2.15 / Lassen #1) (Sulfolobus islandicus) protein is Prefoldin subunit alpha.